The following is a 289-amino-acid chain: Paired box protein 5 homolog (289 aa).

The paired DNA-binding region spans 29–155 (SHTGVNQLGG…SSINRIVRNK (127 aa)). A PAI subdomain region spans residues 32–88 (GVNQLGGVFVNGRPLADTVRAQIVEMSQHGTRPCDISRQLKVSHGCVSKILGRYYST). The tract at residues 107 to 155 (RVVECIAGYKRANPTMFAWEIRQKLIEDQICGEENVPSVSSINRIVRNK) is RED subdomain. 2 stretches are compositionally biased toward low complexity: residues 166-179 (SVTS…SATS) and 189-198 (VQQHMQQSTS). The disordered stretch occupies residues 166–198 (SVTSSAARPSSATSHHQRSPPRGVQQHMQQSTS).

Its subcellular location is the nucleus. The protein localises to the chromosome. Its function is as follows. Transcription factor. Binds to specific DNA sequence motifs in regulatory elements, for example in the genes encoding transcription factor lin-48, apoptosis regulator ced-9 and neuropeptide-like protein nlp-2. Specifies cell fate, playing an essential role in embryonic and larval development. Involved in morphogenesis of the vulva and uterus in hermaphrodites and of the rectal epithelium of the tail in males. Plays multiple roles in the development of the egg-laying system, acting in both lin-3/EGF-pathway-dependent and -independent processes. Positively regulates expression of neuropeptide-like proteins nlp-2 and nlp-7 in uvl cells in an EGF-pathway-dependent manner. Involved in negatively modulating apoptosis in germline and somatic cells, acting in partial redundancy with transcription factor pax-2, probably by directly regulating transcription of ced-9. Positively regulates transcription of lin-48 in hindgut cells and functions in the development of the hindgut. In Caenorhabditis elegans, this protein is Paired box protein 5 homolog.